Consider the following 301-residue polypeptide: Protein translocase subunit SecF (301 aa).

Transmembrane regions (helical) follow at residues 17-37 (YIAL…IFQI), 137-157 (DALF…AIRF), 163-183 (IGAT…FYIL), 190-210 (IFIS…VVVF), 239-261 (LSRT…FFGG), and 272-292 (ILGI…VVLL).

The protein belongs to the SecD/SecF family. SecF subfamily. In terms of assembly, forms a complex with SecD. Part of the essential Sec protein translocation apparatus which comprises SecA, SecYEG and auxiliary proteins SecDF. Other proteins may also be involved.

It localises to the cell inner membrane. Functionally, part of the Sec protein translocase complex. Interacts with the SecYEG preprotein conducting channel. SecDF uses the proton motive force (PMF) to complete protein translocation after the ATP-dependent function of SecA. This is Protein translocase subunit SecF from Thermodesulfovibrio yellowstonii (strain ATCC 51303 / DSM 11347 / YP87).